The primary structure comprises 217 residues: Membrane-spanning 4-domains subfamily A member 6C (217 aa).

The segment covering 1–20 (MIPQVVTNETITTISPNGIN) has biased composition (polar residues). Residues 1-33 (MIPQVVTNETITTISPNGINFPQKDESQPTQQR) are disordered. Over 1–46 (MIPQVVTNETITTISPNGINFPQKDESQPTQQRQDSLKKHLKAEIK) the chain is Cytoplasmic. A helical transmembrane segment spans residues 47-67 (VIVAIQIMCAVTVLALGIILA). At 68 to 84 (SVPPVPYFNSVFSVLLK) the chain is on the extracellular side. A helical transmembrane segment spans residues 85-105 (SGYPFIGALFFIASGILSIIT). Residues 106–121 (ERKSTKPLVDASLTLN) lie on the Cytoplasmic side of the membrane. The helical transmembrane segment at 122-142 (ILSVSFAFVGIIIISVSLAGL) threads the bilayer. The Extracellular segment spans residues 143–186 (HPASEQCKQSKELSLIEHDYYQPFYNSDRSECAVTKSILTGALS). Residues 187–207 (VMLIISVLELGLALLSAMLWL) form a helical membrane-spanning segment. Topologically, residues 208–217 (REGVLTSLRM) are cytoplasmic.

The protein belongs to the MS4A family. In terms of tissue distribution, expressed only by thymus, spleen, peripheral lymph node and bone marrow.

It localises to the membrane. May be involved in signal transduction as a component of a multimeric receptor complex. This chain is Membrane-spanning 4-domains subfamily A member 6C (Ms4a6c), found in Mus musculus (Mouse).